Consider the following 140-residue polypeptide: Small ribosomal subunit protein uS12m (140 aa).

The protein belongs to the universal ribosomal protein uS12 family.

It is found in the mitochondrion. This is Small ribosomal subunit protein uS12m (mrps12) from Dictyostelium citrinum (Slime mold).